The chain runs to 340 residues: Holliday junction branch migration complex subunit RuvB (340 aa).

Positions 1-182 are large ATPase domain (RuvB-L); sequence MSDIDPTVRA…FGIPTRLQFY (182 aa). Residues Leu-21, Arg-22, Gly-63, Lys-66, Thr-67, Thr-68, 129–131, Arg-172, Tyr-182, and Arg-219 contribute to the ATP site; that span reads EDF. Residue Thr-67 coordinates Mg(2+). The interval 183 to 253 is small ATPAse domain (RuvB-S); sequence TEDELFIIVD…LADMALNRLG (71 aa). The head domain (RuvB-H) stretch occupies residues 256 to 340; that stretch reads HLGLDGADRR…PRAQTDLFEG (85 aa). DNA-binding residues include Arg-292, Arg-311, and Arg-316.

The protein belongs to the RuvB family. Homohexamer. Forms an RuvA(8)-RuvB(12)-Holliday junction (HJ) complex. HJ DNA is sandwiched between 2 RuvA tetramers; dsDNA enters through RuvA and exits via RuvB. An RuvB hexamer assembles on each DNA strand where it exits the tetramer. Each RuvB hexamer is contacted by two RuvA subunits (via domain III) on 2 adjacent RuvB subunits; this complex drives branch migration. In the full resolvosome a probable DNA-RuvA(4)-RuvB(12)-RuvC(2) complex forms which resolves the HJ.

The protein localises to the cytoplasm. The enzyme catalyses ATP + H2O = ADP + phosphate + H(+). Its function is as follows. The RuvA-RuvB-RuvC complex processes Holliday junction (HJ) DNA during genetic recombination and DNA repair, while the RuvA-RuvB complex plays an important role in the rescue of blocked DNA replication forks via replication fork reversal (RFR). RuvA specifically binds to HJ cruciform DNA, conferring on it an open structure. The RuvB hexamer acts as an ATP-dependent pump, pulling dsDNA into and through the RuvAB complex. RuvB forms 2 homohexamers on either side of HJ DNA bound by 1 or 2 RuvA tetramers; 4 subunits per hexamer contact DNA at a time. Coordinated motions by a converter formed by DNA-disengaged RuvB subunits stimulates ATP hydrolysis and nucleotide exchange. Immobilization of the converter enables RuvB to convert the ATP-contained energy into a lever motion, pulling 2 nucleotides of DNA out of the RuvA tetramer per ATP hydrolyzed, thus driving DNA branch migration. The RuvB motors rotate together with the DNA substrate, which together with the progressing nucleotide cycle form the mechanistic basis for DNA recombination by continuous HJ branch migration. Branch migration allows RuvC to scan DNA until it finds its consensus sequence, where it cleaves and resolves cruciform DNA. The chain is Holliday junction branch migration complex subunit RuvB from Roseobacter denitrificans (strain ATCC 33942 / OCh 114) (Erythrobacter sp. (strain OCh 114)).